The sequence spans 437 residues: ATP-dependent protease ATPase subunit HslU (437 aa).

ATP is bound by residues Val-18, 60–65 (GCGKTE), Asp-250, Glu-315, and Arg-387.

It belongs to the ClpX chaperone family. HslU subfamily. In terms of assembly, a double ring-shaped homohexamer of HslV is capped on each side by a ring-shaped HslU homohexamer. The assembly of the HslU/HslV complex is dependent on binding of ATP.

It is found in the cytoplasm. Its function is as follows. ATPase subunit of a proteasome-like degradation complex; this subunit has chaperone activity. The binding of ATP and its subsequent hydrolysis by HslU are essential for unfolding of protein substrates subsequently hydrolyzed by HslV. HslU recognizes the N-terminal part of its protein substrates and unfolds these before they are guided to HslV for hydrolysis. The chain is ATP-dependent protease ATPase subunit HslU from Methylobacterium sp. (strain 4-46).